Here is a 188-residue protein sequence, read N- to C-terminus: ATP synthase subunit delta (188 aa).

Belongs to the ATPase delta chain family. F-type ATPases have 2 components, F(1) - the catalytic core - and F(0) - the membrane proton channel. F(1) has five subunits: alpha(3), beta(3), gamma(1), delta(1), epsilon(1). F(0) has three main subunits: a(1), b(2) and c(10-14). The alpha and beta chains form an alternating ring which encloses part of the gamma chain. F(1) is attached to F(0) by a central stalk formed by the gamma and epsilon chains, while a peripheral stalk is formed by the delta and b chains.

The protein resides in the cell inner membrane. Its function is as follows. F(1)F(0) ATP synthase produces ATP from ADP in the presence of a proton or sodium gradient. F-type ATPases consist of two structural domains, F(1) containing the extramembraneous catalytic core and F(0) containing the membrane proton channel, linked together by a central stalk and a peripheral stalk. During catalysis, ATP synthesis in the catalytic domain of F(1) is coupled via a rotary mechanism of the central stalk subunits to proton translocation. Functionally, this protein is part of the stalk that links CF(0) to CF(1). It either transmits conformational changes from CF(0) to CF(1) or is implicated in proton conduction. The chain is ATP synthase subunit delta from Rhizobium etli (strain CIAT 652).